The sequence spans 338 residues: Ketol-acid reductoisomerase (NADP(+)) (338 aa).

In terms of domain architecture, KARI N-terminal Rossmann spans methionine 1–threonine 181. Residues tyrosine 24 to glutamine 27, arginine 47, and serine 52 each bind NADP(+). Residue histidine 107 is part of the active site. NADP(+) is bound at residue glycine 133. One can recognise a KARI C-terminal knotted domain in the interval threonine 182 to isoleucine 327. Mg(2+) contacts are provided by aspartate 190, glutamate 194, glutamate 226, and glutamate 230. Substrate is bound at residue serine 251.

It belongs to the ketol-acid reductoisomerase family. The cofactor is Mg(2+).

It carries out the reaction (2R)-2,3-dihydroxy-3-methylbutanoate + NADP(+) = (2S)-2-acetolactate + NADPH + H(+). The catalysed reaction is (2R,3R)-2,3-dihydroxy-3-methylpentanoate + NADP(+) = (S)-2-ethyl-2-hydroxy-3-oxobutanoate + NADPH + H(+). It participates in amino-acid biosynthesis; L-isoleucine biosynthesis; L-isoleucine from 2-oxobutanoate: step 2/4. It functions in the pathway amino-acid biosynthesis; L-valine biosynthesis; L-valine from pyruvate: step 2/4. In terms of biological role, involved in the biosynthesis of branched-chain amino acids (BCAA). Catalyzes an alkyl-migration followed by a ketol-acid reduction of (S)-2-acetolactate (S2AL) to yield (R)-2,3-dihydroxy-isovalerate. In the isomerase reaction, S2AL is rearranged via a Mg-dependent methyl migration to produce 3-hydroxy-3-methyl-2-ketobutyrate (HMKB). In the reductase reaction, this 2-ketoacid undergoes a metal-dependent reduction by NADPH to yield (R)-2,3-dihydroxy-isovalerate. The polypeptide is Ketol-acid reductoisomerase (NADP(+)) (Albidiferax ferrireducens (strain ATCC BAA-621 / DSM 15236 / T118) (Rhodoferax ferrireducens)).